A 156-amino-acid polypeptide reads, in one-letter code: Ecotin (156 aa).

An N-terminal signal peptide occupies residues 1-19 (MKALLIAAGVAALSSTAMA). An intrachain disulfide couples cysteine 65 to cysteine 102.

The protein belongs to the protease inhibitor I11 (ecotin) family. As to quaternary structure, homodimer.

Its subcellular location is the periplasm. Its function is as follows. General inhibitor of family S1 serine proteases. This is Ecotin from Pseudomonas aeruginosa (strain LESB58).